The primary structure comprises 507 residues: Hexokinase-5 (507 aa).

Residues 4–24 form a helical membrane-spanning segment; that stretch reads AAAVGTAVVVAAAVGVAVVLA. In terms of domain architecture, Hexokinase spans 44–498; that stretch reads RKVAAVIEDV…SGIGAALLAA (455 aa). The hexokinase small subdomain stretch occupies residues 99 to 237; that stretch reads TGNEQGLFYA…GLDMKIAALV (139 aa). Residues G113, T114, and N115 each contribute to the ADP site. D-glucose is bound by residues T203, K204, N238, and D239. Residues 238–487 are hexokinase large subdomain; sequence NDTVGTLAGG…SSVVTKLAND (250 aa). T262 lines the ADP pocket. D-glucose contacts are provided by N265, E293, and E324. Position 452 (G452) interacts with ADP.

The protein belongs to the hexokinase family. In terms of tissue distribution, expressed in roots, leaves, flowers, immature seeds, endosperm and seed coat.

It localises to the plastid. Its subcellular location is the chloroplast outer membrane. The catalysed reaction is a D-hexose + ATP = a D-hexose 6-phosphate + ADP + H(+). It carries out the reaction D-fructose + ATP = D-fructose 6-phosphate + ADP + H(+). It catalyses the reaction D-glucose + ATP = D-glucose 6-phosphate + ADP + H(+). It functions in the pathway carbohydrate metabolism; hexose metabolism. Its pathway is carbohydrate degradation; glycolysis; D-glyceraldehyde 3-phosphate and glycerone phosphate from D-glucose: step 1/4. Fructose and glucose phosphorylating enzyme. Functions as a glucose sensor for plant growth and photosynthesis. Is essential for pollen development, germination, and tube growth. Its activity is necessary for the starch utilization pathway during pollen germination and tube growth, as well as for starch biosynthesis during pollen maturation. The chain is Hexokinase-5 (HXK5) from Oryza sativa subsp. japonica (Rice).